The primary structure comprises 140 residues: Large ribosomal subunit protein uL11 (140 aa).

The protein belongs to the universal ribosomal protein uL11 family. As to quaternary structure, part of the ribosomal stalk of the 50S ribosomal subunit. Interacts with L10 and the large rRNA to form the base of the stalk. L10 forms an elongated spine to which L12 dimers bind in a sequential fashion forming a multimeric L10(L12)X complex. One or more lysine residues are methylated.

Functionally, forms part of the ribosomal stalk which helps the ribosome interact with GTP-bound translation factors. The chain is Large ribosomal subunit protein uL11 from Syntrophotalea carbinolica (strain DSM 2380 / NBRC 103641 / GraBd1) (Pelobacter carbinolicus).